A 210-amino-acid chain; its full sequence is ATP-dependent Clp protease proteolytic subunit (210 aa).

Serine 106 (nucleophile) is an active-site residue. Residue histidine 131 is part of the active site.

Belongs to the peptidase S14 family. In terms of assembly, fourteen ClpP subunits assemble into 2 heptameric rings which stack back to back to give a disk-like structure with a central cavity, resembling the structure of eukaryotic proteasomes.

Its subcellular location is the cytoplasm. The catalysed reaction is Hydrolysis of proteins to small peptides in the presence of ATP and magnesium. alpha-casein is the usual test substrate. In the absence of ATP, only oligopeptides shorter than five residues are hydrolyzed (such as succinyl-Leu-Tyr-|-NHMec, and Leu-Tyr-Leu-|-Tyr-Trp, in which cleavage of the -Tyr-|-Leu- and -Tyr-|-Trp bonds also occurs).. In terms of biological role, cleaves peptides in various proteins in a process that requires ATP hydrolysis. Has a chymotrypsin-like activity. Plays a major role in the degradation of misfolded proteins. This Bartonella henselae (strain ATCC 49882 / DSM 28221 / CCUG 30454 / Houston 1) (Rochalimaea henselae) protein is ATP-dependent Clp protease proteolytic subunit.